Consider the following 1958-residue polypeptide: Sodium channel protein type 10 subunit alpha (1958 aa).

Residues 1–125 lie on the Cytoplasmic side of the membrane; that stretch reads MEFPFGSVGT…FNLIRRTAIK (125 aa). Residues 27-54 are disordered; sequence QIAAHRAAKKGRPKQRGQKDKSEKPRPQ. Residues 32–42 are compositionally biased toward basic residues; sequence RAAKKGRPKQR. Residues 43–54 show a composition bias toward basic and acidic residues; the sequence is GQKDKSEKPRPQ. An I repeat occupies 116–404; that stretch reads FNLIRRTAIK…VTMAYEEQSQ (289 aa). A helical transmembrane segment spans residues 126–149; sequence VSVHSWFSIFITVTILVNCVCMTR. The Extracellular portion of the chain corresponds to 150-154; sequence TDLPE. Residues 155 to 174 form a helical membrane-spanning segment; that stretch reads KLEYAFTVVYTFEALIKILA. Residues 175 to 187 are Cytoplasmic-facing; that stretch reads RGFCLNEFTYLRD. Residues 188-206 form a helical membrane-spanning segment; it reads PWNWLDFSVITLAYVGAAI. The Extracellular portion of the chain corresponds to 207 to 212; sequence DLRGIS. Residues 213–232 form a helical; Voltage-sensor membrane-spanning segment; the sequence is GLRTFRVLRALKTVSVIPGL. Over 233–248 the chain is Cytoplasmic; that stretch reads KVIVGALIHSVRKLAD. The helical transmembrane segment at 249–272 threads the bilayer; the sequence is VTILTVFCLSVFALVGLQLFKGNL. Over 273–340 the chain is Extracellular; the sequence is KNKCIKNGTD…PDFNYTSFDS (68 aa). Cysteine 276 and cysteine 318 are joined by a disulfide. 4 N-linked (GlcNAc...) asparagine glycosylation sites follow: asparagine 279, asparagine 288, asparagine 311, and asparagine 334. Positions 341 to 365 form an intramembrane region, pore-forming; sequence FAWAFLSLFRLMTQDSWERLYQQTL. The Extracellular segment spans residues 366–372; it reads RASGKMY. Residues 373–398 traverse the membrane as a helical segment; that stretch reads MVFFVLVIFLGSFYLVNLILAVVTMA. At 399-658 the chain is on the cytoplasmic side; the sequence is YEEQSQATIA…KWKKFKMVLF (260 aa). Residues serine 440, serine 443, serine 466, and serine 478 each carry the phosphoserine modification. 2 disordered regions span residues 444 to 483 and 539 to 583; these read HNGS…PYNQ and GRGA…APEG. Over residues 549–560 the composition is skewed to pro residues; it reads PRSPLPQSPNPG. Phosphoserine occurs at positions 611 and 614. An II repeat occupies 646–910; it reads CCPKWKKFKM…EDDGEVNNLQ (265 aa). Residues 659–683 traverse the membrane as a helical segment; sequence ELVTDPFAELTITLCIVVNTVFMAM. At 684–694 the chain is on the extracellular side; the sequence is EHYPMTDAFDA. The chain crosses the membrane as a helical span at residues 695–718; it reads MLQAGNIVFTVFFTMEMAFKIIAF. Residues 719–726 are Cytoplasmic-facing; the sequence is DPYYYFQK. Residues 727 to 746 form a helical membrane-spanning segment; the sequence is KWNIFDCVIVTVSLLELSTS. At 747-752 the chain is on the extracellular side; that stretch reads KKGSLS. The helical; Voltage-sensor transmembrane segment at 753 to 772 threads the bilayer; it reads VLRTFRLLRVFKLAKSWPTL. The Cytoplasmic segment spans residues 773 to 788; it reads NMLIKIIGNSVGALGN. The helical transmembrane segment at 789–809 threads the bilayer; sequence LTFILAIIVFIFALVGKQLLS. The Extracellular portion of the chain corresponds to 810–833; sequence ENYGCRRDGISVWNGERLRWHMCD. Positions 834 to 854 form an intramembrane region, pore-forming; the sequence is FFHSFLVVFRILCGEWIENMW. Residues 855–863 lie on the Extracellular side of the membrane; that stretch reads VCMEVSQDY. Residues cysteine 856 and cysteine 865 are joined by a disulfide bond. A helical transmembrane segment spans residues 864–889; it reads ICLTLFLTVMVLGNLVVLNLFIALLL. The Cytoplasmic portion of the chain corresponds to 890–1148; sequence NSFSADNLTA…GWQVRKTCYR (259 aa). The interval 1006–1094 is disordered; the sequence is DLDELEEDVE…SEGSTVDCPD (89 aa). The segment covering 1017–1038 has biased composition (polar residues); it reads ASQSSWQEESPKGQQELLQQVQ. The stretch at 1141-1450 is one III repeat; it reads QVRKTCYRIV…KKYYNAMKKL (310 aa). The chain crosses the membrane as a helical span at residues 1149–1172; it reads IVEHSWFESFIIFMILLSSGALAF. Over 1173-1185 the chain is Extracellular; that stretch reads EDNYLEEKPRVKS. Residues 1186–1211 form a helical membrane-spanning segment; the sequence is VLEYTDRVFTFIFVFEMLLKWVAYGF. Over 1212-1217 the chain is Cytoplasmic; that stretch reads KKYFTN. The helical transmembrane segment at 1218-1239 threads the bilayer; it reads AWCWLDFLIVNISLTSLIAKIL. Over 1240–1243 the chain is Extracellular; the sequence is EYSD. The helical; Voltage-sensor transmembrane segment at 1244-1265 threads the bilayer; sequence VASIKALRTLRALRPLRALSRF. Residues 1266-1284 are Cytoplasmic-facing; the sequence is EGMRVVVDALVGAIPSIMN. Residues 1285 to 1312 traverse the membrane as a helical segment; sequence VLLVCLIFWLIFSIMGVNLFAGKFSRCV. Topologically, residues 1313 to 1354 are extracellular; the sequence is DTRSNPFSVVNSTFVTNKSDCYNQNNTGHFFWVNVKVNFDNV. 3 N-linked (GlcNAc...) asparagine glycosylation sites follow: asparagine 1323, asparagine 1329, and asparagine 1337. The segment at residues 1355–1376 is an intramembrane region (pore-forming); it reads AMGYLALLQVATFKGWMDIMYA. The Extracellular segment spans residues 1377–1392; the sequence is AVDSRDINSQPNWEES. The chain crosses the membrane as a helical span at residues 1393 to 1419; sequence LYMYLYFVVFIIFGGFFTLNLFVGVII. Topologically, residues 1420–1472 are cytoplasmic; sequence DNFNQQKKKLGGQDIFMTEEQKKYYNAMKKLGSKKPQKPIPRPLNKYQGFVFD. Serine 1452 bears the Phosphoserine; by PKC mark. Residues 1459–1758 form an IV repeat; the sequence is IPRPLNKYQG…WEKFDPEATQ (300 aa). Residues 1473–1496 form a helical membrane-spanning segment; the sequence is IVTRQAFDIIIMALICLNMITMMV. Residues 1497–1507 are Extracellular-facing; that stretch reads ETDNQSEEKTK. Asparagine 1500 is a glycosylation site (N-linked (GlcNAc...) asparagine). A helical transmembrane segment spans residues 1508-1531; it reads VLGRINQFFVAVFTGECVMKMFAL. The Cytoplasmic segment spans residues 1532–1537; the sequence is RQYYFT. A helical membrane pass occupies residues 1538–1561; it reads NGWNVFDFIVVILSISSLLFSAIL. Residues 1562–1573 are Extracellular-facing; sequence SSLESYFSPTLL. Residues 1574–1595 form a helical; Voltage-sensor membrane-spanning segment; that stretch reads RVIRLARIGRILRLIRAAKGIR. Over 1596–1610 the chain is Cytoplasmic; it reads TLLFALMMSLPALFN. A helical membrane pass occupies residues 1611–1633; that stretch reads IGLLLFLVMFIYSIFGMASFANV. Residues 1634 to 1647 lie on the Extracellular side of the membrane; the sequence is IDEAGIDDMFNFKT. The pore-forming intramembrane region spans 1648 to 1670; the sequence is FGNSMLCLFQITTSAGWDGLLSP. Topologically, residues 1671–1698 are extracellular; that stretch reads ILNTGPPYCDPNRPNSNGSKGNCGSPAV. An N-linked (GlcNAc...) asparagine glycan is attached at asparagine 1687. A helical membrane pass occupies residues 1699–1723; the sequence is GILFFTTYIIISFLIVVNMYIAVIL. Residues 1724-1958 are Cytoplasmic-facing; it reads ENFNVATEES…AKEGKSPGPQ (235 aa). Residues 1852 to 1881 enclose the IQ domain; it reads EDISATIIQKAYRNYMLQRSLMLSNPLHVP. A disordered region spans residues 1901–1958; that stretch reads NDNGGLPDKSETASATSFPPSYDSVTRGLSDRANISTSSSMQNEDEVTAKEGKSPGPQ. Residues 1933–1942 are compositionally biased toward polar residues; sequence ANISTSSSMQ. Residues 1947–1958 show a composition bias toward basic and acidic residues; that stretch reads VTAKEGKSPGPQ.

It belongs to the sodium channel (TC 1.A.1.10) family. Nav1.8/SCN10A subfamily. As to quaternary structure, the channel consists of an ion conducting pore forming alpha-subunit regulated by one or more associated auxiliary subunits SCN1B, SCN2B and SCN3B; electrophysiological properties may vary depending on the type of the associated beta subunits. Found in a number of complexes with PRX, DYNLT1 and PDZD2. Interacts with proteins such as FSTL1, PRX, DYNLT1, PDZD2, S100A10 and many others. Interacts with NEDD4 and NEDD4L. In terms of processing, ubiquitinated by NEDD4L; which promotes its endocytosis. Post-translationally, phosphorylation at Ser-1452 by PKC in a highly conserved cytoplasmic loop slows inactivation of the sodium channel and reduces peak sodium currents. Lacks the cysteine which covalently binds the conotoxin GVIIJ. This cysteine (position 815) is speculated in other sodium channel subunits alpha to be implied in covalent binding with the sodium channel subunit beta-2 or beta-4. In terms of tissue distribution, expressed in dorsal root ganglion and trigeminal ganglion.

Its subcellular location is the cell membrane. The catalysed reaction is Na(+)(in) = Na(+)(out). Its function is as follows. Tetrodotoxin-resistant channel that mediates the voltage-dependent sodium ion permeability of excitable membranes. Assuming opened or closed conformations in response to the voltage difference across the membrane, the protein forms a sodium-selective channel through which sodium ions may pass in accordance with their electrochemical gradient. Plays a role in neuropathic pain mechanisms. The chain is Sodium channel protein type 10 subunit alpha from Mus musculus (Mouse).